A 278-amino-acid chain; its full sequence is 4-diphosphocytidyl-2-C-methyl-D-erythritol kinase (278 aa).

Lysine 10 is a catalytic residue. Residue proline 93 to serine 103 participates in ATP binding. Residue aspartate 135 is part of the active site.

The protein belongs to the GHMP kinase family. IspE subfamily.

It catalyses the reaction 4-CDP-2-C-methyl-D-erythritol + ATP = 4-CDP-2-C-methyl-D-erythritol 2-phosphate + ADP + H(+). It participates in isoprenoid biosynthesis; isopentenyl diphosphate biosynthesis via DXP pathway; isopentenyl diphosphate from 1-deoxy-D-xylulose 5-phosphate: step 3/6. Catalyzes the phosphorylation of the position 2 hydroxy group of 4-diphosphocytidyl-2C-methyl-D-erythritol. This chain is 4-diphosphocytidyl-2-C-methyl-D-erythritol kinase, found in Thiobacillus denitrificans (strain ATCC 25259 / T1).